Consider the following 338-residue polypeptide: Arginase, mitochondrial (338 aa).

The N-terminal 15 residues, 1-15 (MSTIARRGFHYMQRL), are a transit peptide targeting the mitochondrion. L-ornithine-binding positions include Ser73 and 92–95 (DSTN). Mn(2+) is bound by residues His157, Asp181, His183, and Asp185. L-ornithine is bound at residue 185 to 187 (DLY). 191–193 (EGN) lines the substrate pocket. Ser220 provides a ligand contact to L-ornithine. Mn(2+) is bound by residues Asp266 and Asp268. Glu309 serves as a coordination point for substrate.

It belongs to the arginase family. In terms of assembly, forms homohexamers. Mn(2+) is required as a cofactor.

Its subcellular location is the mitochondrion. It carries out the reaction L-arginine + H2O = urea + L-ornithine. The enzyme catalyses agmatine + H2O = urea + putrescine. It participates in nitrogen metabolism; urea cycle; L-ornithine and urea from L-arginine: step 1/1. It functions in the pathway amine and polyamine biosynthesis; putrescine biosynthesis via agmatine pathway; putrescine from agmatine: step 1/1. Catalyzes the hydrolysis of L-arginine to urea and L-ornithine. The latter can be utilized in the urea cycle or as a precursor for the synthesis of both polyamines and proline. Possesses agmatinase activity. Catalyzes the formation of putrescine from agmatine. The protein is Arginase, mitochondrial of Medicago truncatula (Barrel medic).